A 580-amino-acid polypeptide reads, in one-letter code: Efflux pump dotC (580 aa).

Residues 1–34 (MSEDHTKADNLSEKDPHSPERSDSSSHEDAHARE) show a composition bias toward basic and acidic residues. Residues 1–45 (MSEDHTKADNLSEKDPHSPERSDSSSHEDAHAREEEESSDDDGAL) are disordered. Residue asparagine 10 is glycosylated (N-linked (GlcNAc...) asparagine). A compositionally biased stretch (acidic residues) spans 35–44 (EEESSDDDGA). A helical membrane pass occupies residues 49–69 (PASLIAIVMIALSLAVFLSAL). A glycan (N-linked (GlcNAc...) asparagine) is linked at asparagine 86. 13 helical membrane passes run 89-109 (AAYT…TPIW), 127-147 (ALFM…MLIT), 153-173 (GAAG…LFSL), 181-201 (GMIG…GGAF), 209-229 (WCFY…FFFL), 242-262 (FAAI…MFLF), 275-295 (SATV…FGLV), 318-338 (ALLV…YLPL), 348-368 (PILA…SAAA), 380-400 (LIPM…LINF), 409-429 (LIIY…APLV), 444-466 (TATF…QVLY), and 519-539 (SPMW…ILLV). A disordered region spans residues 559 to 580 (KKAEAERKAERQAKDLEKAQKS).

This sequence belongs to the major facilitator superfamily. TCR/Tet family.

It is found in the cell membrane. It localises to the vacuole membrane. Its function is as follows. Efflux pump; part of the gene cluster that mediates the biosynthesis of dothistromin (DOTH), a polyketide toxin very similar in structure to the aflatoxin precursor, versicolorin B. One function of dotC may be to transport early-stage dothistromin biosynthetic intermediates from the cytoplasm into vacuoles, thereby affecting the rate of dothistromin production. The sequence is that of Efflux pump dotC from Dothistroma septosporum (strain NZE10 / CBS 128990) (Red band needle blight fungus).